The following is a 379-amino-acid chain: Serpin B5 (379 aa).

N-linked (GlcNAc...) asparagine glycans are attached at residues asparagine 133, asparagine 176, and asparagine 361.

It belongs to the serpin family. Ov-serpin subfamily.

It is found in the secreted. The protein resides in the extracellular space. In terms of biological role, may not exhibit serine protease inhibitory activity. The protein is Serpin B5 (serpinb5) of Xenopus tropicalis (Western clawed frog).